The sequence spans 182 residues: 7-carboxy-7-deazaguanine synthase (182 aa).

Substrate is bound by residues 12–14 and Arg27; that span reads LQG. Positions 18–182 constitute a Radical SAM core domain; that stretch reads HTGTPAVFIR…LQTHKLIDIR (165 aa). Residues Cys31, Cys35, and Cys38 each coordinate [4Fe-4S] cluster. Thr40 provides a ligand contact to Mg(2+). Residue Thr68 coordinates substrate. S-adenosyl-L-methionine is bound by residues Gly70 and 111-113; that span reads SPK.

It belongs to the radical SAM superfamily. 7-carboxy-7-deazaguanine synthase family. In terms of assembly, homodimer. It depends on [4Fe-4S] cluster as a cofactor. S-adenosyl-L-methionine serves as cofactor. The cofactor is Mg(2+).

The catalysed reaction is 6-carboxy-5,6,7,8-tetrahydropterin + H(+) = 7-carboxy-7-deazaguanine + NH4(+). It functions in the pathway purine metabolism; 7-cyano-7-deazaguanine biosynthesis. Its function is as follows. Catalyzes the complex heterocyclic radical-mediated conversion of 6-carboxy-5,6,7,8-tetrahydropterin (CPH4) to 7-carboxy-7-deazaguanine (CDG), a step common to the biosynthetic pathways of all 7-deazapurine-containing compounds. The sequence is that of 7-carboxy-7-deazaguanine synthase from Bacteroides thetaiotaomicron (strain ATCC 29148 / DSM 2079 / JCM 5827 / CCUG 10774 / NCTC 10582 / VPI-5482 / E50).